The sequence spans 390 residues: 1-deoxy-D-xylulose 5-phosphate reductoisomerase (390 aa).

Residues T10, G11, S12, I13, G36, N38, and N124 each coordinate NADPH. Position 125 (K125) interacts with 1-deoxy-D-xylulose 5-phosphate. Residue E126 coordinates NADPH. A Mn(2+)-binding site is contributed by D150. 4 residues coordinate 1-deoxy-D-xylulose 5-phosphate: S151, E152, S176, and H199. A Mn(2+)-binding site is contributed by E152. G205 contacts NADPH. 4 residues coordinate 1-deoxy-D-xylulose 5-phosphate: S212, N217, K218, and E221. E221 contacts Mn(2+).

It belongs to the DXR family. Mg(2+) is required as a cofactor. It depends on Mn(2+) as a cofactor.

The catalysed reaction is 2-C-methyl-D-erythritol 4-phosphate + NADP(+) = 1-deoxy-D-xylulose 5-phosphate + NADPH + H(+). Its pathway is isoprenoid biosynthesis; isopentenyl diphosphate biosynthesis via DXP pathway; isopentenyl diphosphate from 1-deoxy-D-xylulose 5-phosphate: step 1/6. Catalyzes the NADPH-dependent rearrangement and reduction of 1-deoxy-D-xylulose-5-phosphate (DXP) to 2-C-methyl-D-erythritol 4-phosphate (MEP). This Microcystis aeruginosa (strain NIES-843 / IAM M-2473) protein is 1-deoxy-D-xylulose 5-phosphate reductoisomerase.